Here is a 513-residue protein sequence, read N- to C-terminus: ATP synthase subunit alpha (513 aa).

Position 169-176 (169-176 (GDRQTGKT)) interacts with ATP.

This sequence belongs to the ATPase alpha/beta chains family. In terms of assembly, F-type ATPases have 2 components, CF(1) - the catalytic core - and CF(0) - the membrane proton channel. CF(1) has five subunits: alpha(3), beta(3), gamma(1), delta(1), epsilon(1). CF(0) has three main subunits: a(1), b(2) and c(9-12). The alpha and beta chains form an alternating ring which encloses part of the gamma chain. CF(1) is attached to CF(0) by a central stalk formed by the gamma and epsilon chains, while a peripheral stalk is formed by the delta and b chains.

The protein resides in the cell inner membrane. The enzyme catalyses ATP + H2O + 4 H(+)(in) = ADP + phosphate + 5 H(+)(out). Produces ATP from ADP in the presence of a proton gradient across the membrane. The alpha chain is a regulatory subunit. The protein is ATP synthase subunit alpha of Klebsiella pneumoniae subsp. pneumoniae (strain ATCC 700721 / MGH 78578).